The chain runs to 185 residues: ATP synthase subunit b 2 (185 aa).

Positions 1 to 24 (MADSHGNAKGATAHTEAGGGHKAP) are disordered. The chain crosses the membrane as a helical span at residues 34 to 56 (ASQLVSLTIAFVALYLISSRLAL).

Belongs to the ATPase B chain family. In terms of assembly, F-type ATPases have 2 components, F(1) - the catalytic core - and F(0) - the membrane proton channel. F(1) has five subunits: alpha(3), beta(3), gamma(1), delta(1), epsilon(1). F(0) has three main subunits: a(1), b(2) and c(10-14). The alpha and beta chains form an alternating ring which encloses part of the gamma chain. F(1) is attached to F(0) by a central stalk formed by the gamma and epsilon chains, while a peripheral stalk is formed by the delta and b chains.

Its subcellular location is the cell inner membrane. Its function is as follows. F(1)F(0) ATP synthase produces ATP from ADP in the presence of a proton or sodium gradient. F-type ATPases consist of two structural domains, F(1) containing the extramembraneous catalytic core and F(0) containing the membrane proton channel, linked together by a central stalk and a peripheral stalk. During catalysis, ATP synthesis in the catalytic domain of F(1) is coupled via a rotary mechanism of the central stalk subunits to proton translocation. Component of the F(0) channel, it forms part of the peripheral stalk, linking F(1) to F(0). The b'-subunit is a diverged and duplicated form of b found in plants and photosynthetic bacteria. The sequence is that of ATP synthase subunit b 2 (atpF2) from Nitrobacter hamburgensis (strain DSM 10229 / NCIMB 13809 / X14).